We begin with the raw amino-acid sequence, 299 residues long: GTPase Era (299 aa).

An Era-type G domain is found at 5–172 (KSGFVSIIGR…IDVLKTYLPE (168 aa)). Residues 13–20 (GRPNVGKS) form a G1 region. 13 to 20 (GRPNVGKS) is a GTP binding site. The segment at 39–43 (QTTRN) is G2. The interval 60-63 (DTPG) is G3. Residues 60-64 (DTPGI) and 122-125 (NKID) each bind GTP. Residues 122 to 125 (NKID) are G4. Positions 151 to 153 (ISA) are G5. Residues 203–280 (TSEEIPHAIG…YLELWVKVQK (78 aa)) form the KH type-2 domain.

The protein belongs to the TRAFAC class TrmE-Era-EngA-EngB-Septin-like GTPase superfamily. Era GTPase family. In terms of assembly, monomer.

Its subcellular location is the cytoplasm. It is found in the cell membrane. In terms of biological role, an essential GTPase that binds both GDP and GTP, with rapid nucleotide exchange. Plays a role in 16S rRNA processing and 30S ribosomal subunit biogenesis and possibly also in cell cycle regulation and energy metabolism. This is GTPase Era from Staphylococcus haemolyticus (strain JCSC1435).